The following is a 249-amino-acid chain: Small ribosomal subunit protein eS6 (249 aa).

The segment covering 216-229 (RMKEAKEKRQEQIA) has biased composition (basic and acidic residues). The tract at residues 216-249 (RMKEAKEKRQEQIAKRRRLSSLRASTSKSESSQK) is disordered. 5 positions are modified to phosphoserine: Ser-235, Ser-236, Ser-240, Ser-244, and Ser-247. Over residues 236–249 (SLRASTSKSESSQK) the composition is skewed to low complexity.

It belongs to the eukaryotic ribosomal protein eS6 family. In terms of assembly, component of the small ribosomal subunit. Post-translationally, ribosomal protein S6 is the major substrate of protein kinases in eukaryote ribosomes. The phosphorylation is stimulated by growth factors, tumor promoting agents, and mitogens. It is dephosphorylated at growth arrest.

The protein resides in the cytoplasm. Component of the 40S small ribosomal subunit. Plays an important role in controlling cell growth and proliferation through the selective translation of particular classes of mRNA. This Oncorhynchus mykiss (Rainbow trout) protein is Small ribosomal subunit protein eS6 (rps6).